Here is a 123-residue protein sequence, read N- to C-terminus: Large ribosomal subunit protein uL14 (123 aa).

Belongs to the universal ribosomal protein uL14 family. Part of the 50S ribosomal subunit. Forms a cluster with proteins L3 and L19. In the 70S ribosome, L14 and L19 interact and together make contacts with the 16S rRNA in bridges B5 and B8.

Functionally, binds to 23S rRNA. Forms part of two intersubunit bridges in the 70S ribosome. The chain is Large ribosomal subunit protein uL14 from Erwinia tasmaniensis (strain DSM 17950 / CFBP 7177 / CIP 109463 / NCPPB 4357 / Et1/99).